The following is a 677-amino-acid chain: O-fucosyltransferase 27 (677 aa).

The helical; Signal-anchor for type II membrane protein transmembrane segment at 15–35 (WIGLLGLVLSAFSLLVHFLLA) threads the bilayer. The N-linked (GlcNAc...) asparagine glycan is linked to N130. The interval 410-437 (PPSIEVETKHDSLKSTRQRPQPLPPPPA) is disordered. N542 and N592 each carry an N-linked (GlcNAc...) asparagine glycan. The segment at 619–677 (NAEKEEDLDEEDLSSSGLFFGHKESGGNNNGNNETVNSEANNKEEGQLEDQEELEGSER) is disordered. Acidic residues predominate over residues 622–631 (KEEDLDEEDL). Over residues 644 to 658 (GGNNNGNNETVNSEA) the composition is skewed to low complexity. An N-linked (GlcNAc...) asparagine glycan is attached at N651. A compositionally biased stretch (acidic residues) spans 665 to 677 (QLEDQEELEGSER).

Belongs to the glycosyltransferase GT106 family.

It is found in the membrane. The protein operates within glycan metabolism. This is O-fucosyltransferase 27 from Arabidopsis thaliana (Mouse-ear cress).